A 205-amino-acid polypeptide reads, in one-letter code: Ras-related protein Rab-1A (205 aa).

Ser-2 carries the N-acetylserine modification. The GTP site is built by Ser-20, Gly-21, Gly-23, Lys-24, Ser-25, Cys-26, Glu-38, and Thr-43. Ser-25 is a Mg(2+) binding site. Residues 34–48 (DTYTESYISTIGVDF) carry the Switch 1 motif. Residue Thr-43 participates in Mg(2+) binding. Residues Lys-49 and Lys-61 each participate in a glycyl lysine isopeptide (Lys-Gly) (interchain with G-Cter in ubiquitin) cross-link. Asp-66 is a Mg(2+) binding site. Residues 66–83 (DTAGQERFRTITSSYYRG) carry the Switch 2 motif. GTP-binding residues include Gly-69, Asn-124, Lys-125, Asp-127, Ala-155, and Lys-156. Residues 178–205 (PGATAGGAEKSNVKIQSTPVKQSGGGCC) form a disordered region. Ser-194 carries the phosphoserine modification. Residues Cys-204 and Cys-205 are each lipidated (S-geranylgeranyl cysteine).

It belongs to the small GTPase superfamily. Rab family. May interact with YIPF5. Interacts with C9orf72; the interaction mediates recruitment of RAB1A to the ATG1/ULK1 kinase complex. Interacts with GDI1; this promotes dissociation from membranes. Mg(2+) is required as a cofactor. Phosphorylated by CDK1 kinase during mitosis. In terms of processing, ubiquitinated via 'Lys-11'-linked ubiquitination on Lys-49 and Lys-61; impairing the recruitment of guanosine diphosphate (GDP) dissociation inhibitor 1/GDI1.

The protein localises to the golgi apparatus. It localises to the endoplasmic reticulum. It is found in the early endosome. The protein resides in the cytoplasm. Its subcellular location is the cytosol. The protein localises to the membrane. It localises to the melanosome. It catalyses the reaction GTP + H2O = GDP + phosphate + H(+). Regulated by guanine nucleotide exchange factors (GEFs) which promote the exchange of bound GDP for free GTP. Regulated by GTPase activating proteins (GAPs) which increase the GTP hydrolysis activity. Inhibited by GDP dissociation inhibitors (GDIs). Functionally, the small GTPases Rab are key regulators of intracellular membrane trafficking, from the formation of transport vesicles to their fusion with membranes. Rabs cycle between an inactive GDP-bound form and an active GTP-bound form that is able to recruit to membranes different sets of downstream effectors directly responsible for vesicle formation, movement, tethering and fusion. RAB1A regulates vesicular protein transport from the endoplasmic reticulum (ER) to the Golgi compartment and on to the cell surface, and plays a role in IL-8 and growth hormone secretion. Required to modulate the compacted morphology of the Golgi. Regulates the level of CASR present at the cell membrane. Plays a role in cell adhesion and cell migration, via its role in protein trafficking. Plays a role in autophagosome assembly and cellular defense reactions against pathogenic bacteria. Plays a role in microtubule-dependent protein transport by early endosomes and in anterograde melanosome transport. This chain is Ras-related protein Rab-1A (RAB1A), found in Canis lupus familiaris (Dog).